The primary structure comprises 117 residues: Large ribosomal subunit protein uL18 (117 aa).

The protein belongs to the universal ribosomal protein uL18 family. Part of the 50S ribosomal subunit; part of the 5S rRNA/L5/L18/L25 subcomplex. Contacts the 5S and 23S rRNAs.

Its function is as follows. This is one of the proteins that bind and probably mediate the attachment of the 5S RNA into the large ribosomal subunit, where it forms part of the central protuberance. This Blochmanniella pennsylvanica (strain BPEN) protein is Large ribosomal subunit protein uL18.